The following is a 396-amino-acid chain: Actin-related protein 6 (396 aa).

N-acetylthreonine is present on T2. K260 is subject to N6-acetyllysine.

This sequence belongs to the actin family. ARP6 subfamily. In terms of assembly, component of the chromatin-remodeling SRCAP complex composed of at least SRCAP, DMAP1, RUVBL1, RUVBL2, ACTL6A, YEATS4, ACTR6 and ZNHIT1. Interacts with CBX1, CBX3 and CBX5.

Its subcellular location is the cytoplasm. It localises to the cytoskeleton. It is found in the nucleus. The protein localises to the nucleolus. Required for formation and/or maintenance of proper nucleolar structure and function. Plays a dual role in the regulation of ribosomal DNA (rDNA) transcription. In the presence of high glucose, maintains active rDNA transcription through H2A.Z deposition and under glucose starvation, is required for the repression of rDNA transcription, and this function may be independent of H2A.Z. In Homo sapiens (Human), this protein is Actin-related protein 6 (ACTR6).